The sequence spans 148 residues: NADH-quinone oxidoreductase subunit C (148 aa).

The protein belongs to the complex I 30 kDa subunit family. As to quaternary structure, NDH-1 is composed of 14 different subunits. Subunits NuoB, C, D, E, F, and G constitute the peripheral sector of the complex.

It localises to the cell membrane. The enzyme catalyses a quinone + NADH + 5 H(+)(in) = a quinol + NAD(+) + 4 H(+)(out). Functionally, NDH-1 shuttles electrons from NADH, via FMN and iron-sulfur (Fe-S) centers, to quinones in the respiratory chain. The immediate electron acceptor for the enzyme in this species is believed to be a menaquinone. Couples the redox reaction to proton translocation (for every two electrons transferred, four hydrogen ions are translocated across the cytoplasmic membrane), and thus conserves the redox energy in a proton gradient. This chain is NADH-quinone oxidoreductase subunit C, found in Moorella thermoacetica (strain ATCC 39073 / JCM 9320).